A 508-amino-acid polypeptide reads, in one-letter code: Pentatricopeptide repeat-containing protein At5g48730, chloroplastic (508 aa).

Polar residues predominate over residues 1 to 10 (MVSLSTSTSH). Positions 1–22 (MVSLSTSTSHAPPLPTNRRTAE) are disordered. The N-terminal 28 residues, 1-28 (MVSLSTSTSHAPPLPTNRRTAERTFTVR), are a transit peptide targeting the chloroplast. PPR repeat units follow at residues 149 to 183 (NVGIYVKLIVMLGKCKQPEKAHELFQEMINEGCVV), 184 to 214 (NHEVYTALVSAYSRSGRFDAAFTLLERMKSS), 220 to 254 (DVHTYSILIKSFLQVFAFDKVQDLLSDMRRQGIRP), 255 to 290 (NTITYNTLIDAYGKAKMFVEMESTLIQMLGEDDCKP), 291 to 325 (DSWTMNSTLRAFGGNGQIEMMENCYEKFQSSGIEP), 326 to 360 (NIRTFNILLDSYGKSGNYKKMSAVMEYMQKYHYSW), 361 to 395 (TIVTYNVVIDAFGRAGDLKQMEYLFRLMQSERIFP), 396 to 430 (SCVTLCSLVRAYGRASKADKIGGVLRFIENSDIRL), 431 to 465 (DLVFFNCLVDAYGRMEKFAEMKGVLELMEKKGFKP), and 466 to 500 (DKITYRTMVKAYRISGMTTHVKELHGVVESVGEAQ).

It belongs to the PPR family. P subfamily.

It localises to the plastid. It is found in the chloroplast. This chain is Pentatricopeptide repeat-containing protein At5g48730, chloroplastic, found in Arabidopsis thaliana (Mouse-ear cress).